A 340-amino-acid polypeptide reads, in one-letter code: Adenosine kinase (340 aa).

D293 is a catalytic residue.

This sequence belongs to the carbohydrate kinase PfkB family. As to quaternary structure, monomer. It depends on Mg(2+) as a cofactor.

It carries out the reaction adenosine + ATP = AMP + ADP + H(+). It functions in the pathway purine metabolism; AMP biosynthesis via salvage pathway; AMP from adenosine: step 1/1. ATP dependent phosphorylation of adenosine and other related nucleoside analogs to monophosphate derivatives. The polypeptide is Adenosine kinase (adk) (Dictyostelium discoideum (Social amoeba)).